The following is a 138-amino-acid chain: Acidic phospholipase A2 Drk-a1 (138 aa).

A signal peptide spans 1–16; it reads MRTLWIVAVCLIGVEG. 7 disulfides stabilise this stretch: Cys-42/Cys-131, Cys-44/Cys-60, Cys-59/Cys-111, Cys-65/Cys-138, Cys-66/Cys-104, Cys-73/Cys-97, and Cys-91/Cys-102. Ca(2+)-binding residues include Tyr-43, Gly-45, and Gly-47. Residue His-63 is part of the active site. Asp-64 lines the Ca(2+) pocket. The active site involves Asp-105.

The protein belongs to the phospholipase A2 family. Group II subfamily. D49 sub-subfamily. Ca(2+) is required as a cofactor. In terms of tissue distribution, expressed by the venom gland.

The protein resides in the secreted. The enzyme catalyses a 1,2-diacyl-sn-glycero-3-phosphocholine + H2O = a 1-acyl-sn-glycero-3-phosphocholine + a fatty acid + H(+). Snake venom phospholipase A2 (PLA2) that exhibits high hydrolytic activities and shows strong preference for the anionic micelles (dPPC with deoxycholate) to the zwitterionic micelles (dPPC with Triton X-100). PLA2 catalyzes the calcium-dependent hydrolysis of the 2-acyl groups in 3-sn-phosphoglycerides. The sequence is that of Acidic phospholipase A2 Drk-a1 from Daboia russelii (Russel's viper).